A 121-amino-acid polypeptide reads, in one-letter code: Large ribosomal subunit protein bL12 (121 aa).

This sequence belongs to the bacterial ribosomal protein bL12 family. As to quaternary structure, homodimer. Part of the ribosomal stalk of the 50S ribosomal subunit. Forms a multimeric L10(L12)X complex, where L10 forms an elongated spine to which 2 to 4 L12 dimers bind in a sequential fashion. Binds GTP-bound translation factors.

Its function is as follows. Forms part of the ribosomal stalk which helps the ribosome interact with GTP-bound translation factors. Is thus essential for accurate translation. The protein is Large ribosomal subunit protein bL12 of Salmonella agona (strain SL483).